A 185-amino-acid polypeptide reads, in one-letter code: Elongation factor P (185 aa).

The protein belongs to the elongation factor P family.

The protein localises to the cytoplasm. Its pathway is protein biosynthesis; polypeptide chain elongation. Involved in peptide bond synthesis. Stimulates efficient translation and peptide-bond synthesis on native or reconstituted 70S ribosomes in vitro. Probably functions indirectly by altering the affinity of the ribosome for aminoacyl-tRNA, thus increasing their reactivity as acceptors for peptidyl transferase. In Paraburkholderia phymatum (strain DSM 17167 / CIP 108236 / LMG 21445 / STM815) (Burkholderia phymatum), this protein is Elongation factor P.